A 473-amino-acid polypeptide reads, in one-letter code: Probable lipid II flippase MurJ (473 aa).

13 helical membrane-spanning segments follow: residues 31–51, 90–110, 125–145, 153–173, 177–197, 215–235, 253–273, 300–320, 327–347, 360–380, 382–402, 414–434, and 439–459; these read TFGASSTLDAYYVSIVFPFFL, LVTLLIVFLSEVFPYFMASIF, LIRLTAPFITIVFVWAVFYSV, FLPALTPMFSNVGVIVGCLFG, WAAAGFTIGGLAALLVLLPFG, FFGTFMTMAVSQVTTLIDVNV, LYQLPLGIFGVAVSTVALSTL, IGLMALSERIISLLFGYGAFT, SAQILFMYAIGLCFVSLFNLL, PFFATLLVSAVNISLDVILGF, MGASGIALATSVSYIAGFVFL, IFKISLASAVMGTVILLLRGS, and LGTIFLVLIGVFVYVLFSKLL.

Belongs to the MurJ/MviN family.

It localises to the cell inner membrane. The protein operates within cell wall biogenesis; peptidoglycan biosynthesis. In terms of biological role, involved in peptidoglycan biosynthesis. Transports lipid-linked peptidoglycan precursors from the inner to the outer leaflet of the cytoplasmic membrane. The sequence is that of Probable lipid II flippase MurJ from Thermotoga maritima (strain ATCC 43589 / DSM 3109 / JCM 10099 / NBRC 100826 / MSB8).